The primary structure comprises 205 residues: Holliday junction branch migration complex subunit RuvA (205 aa).

A domain I region spans residues 1 to 64 (MIGRLSGILV…EDAQLLYGFI (64 aa)). Residues 65–143 (TKQERALFRL…SLLEASAGSE (79 aa)) form a domain II region. The interval 144–156 (REFMLQSNYTPAA) is flexible linker. The tract at residues 157–205 (AVDSAEEDAISALLSLGYKPAQASKSVSAAFKEGMSSETLIKAALKSML) is domain III.

The protein belongs to the RuvA family. As to quaternary structure, homotetramer. Forms an RuvA(8)-RuvB(12)-Holliday junction (HJ) complex. HJ DNA is sandwiched between 2 RuvA tetramers; dsDNA enters through RuvA and exits via RuvB. An RuvB hexamer assembles on each DNA strand where it exits the tetramer. Each RuvB hexamer is contacted by two RuvA subunits (via domain III) on 2 adjacent RuvB subunits; this complex drives branch migration. In the full resolvosome a probable DNA-RuvA(4)-RuvB(12)-RuvC(2) complex forms which resolves the HJ.

Its subcellular location is the cytoplasm. Its function is as follows. The RuvA-RuvB-RuvC complex processes Holliday junction (HJ) DNA during genetic recombination and DNA repair, while the RuvA-RuvB complex plays an important role in the rescue of blocked DNA replication forks via replication fork reversal (RFR). RuvA specifically binds to HJ cruciform DNA, conferring on it an open structure. The RuvB hexamer acts as an ATP-dependent pump, pulling dsDNA into and through the RuvAB complex. HJ branch migration allows RuvC to scan DNA until it finds its consensus sequence, where it cleaves and resolves the cruciform DNA. The protein is Holliday junction branch migration complex subunit RuvA of Shewanella frigidimarina (strain NCIMB 400).